Here is a 318-residue protein sequence, read N- to C-terminus: Putative HTH-type transcriptional regulatory protein MJ1164 (318 aa).

In terms of domain architecture, HTH cro/C1-type spans 131–189 (LKEVREAMGISVGKLAEVAGVSRKAIYKYETQMANPSVDVALKIEEFLDVPLVKGIDLF). The H-T-H motif DNA-binding region spans 142 to 161 (VGKLAEVAGVSRKAIYKYET).

This is Putative HTH-type transcriptional regulatory protein MJ1164 from Methanocaldococcus jannaschii (strain ATCC 43067 / DSM 2661 / JAL-1 / JCM 10045 / NBRC 100440) (Methanococcus jannaschii).